The chain runs to 193 residues: Probable GTP-binding protein EngB (193 aa).

The EngB-type G domain maps to 22–193 (MYPEISFIGR…ELWQIIEDLL (172 aa)). Residues 30–37 (GRSNVGKS), 57–61 (GKTRT), 75–78 (DLPG), 142–145 (TKMD), and 174–176 (FSS) contribute to the GTP site. Mg(2+) contacts are provided by Ser-37 and Thr-59.

Belongs to the TRAFAC class TrmE-Era-EngA-EngB-Septin-like GTPase superfamily. EngB GTPase family. It depends on Mg(2+) as a cofactor.

In terms of biological role, necessary for normal cell division and for the maintenance of normal septation. The protein is Probable GTP-binding protein EngB of Natranaerobius thermophilus (strain ATCC BAA-1301 / DSM 18059 / JW/NM-WN-LF).